Reading from the N-terminus, the 101-residue chain is Small ribosomal subunit protein bS18c (101 aa).

This sequence belongs to the bacterial ribosomal protein bS18 family. Part of the 30S ribosomal subunit.

The protein resides in the plastid. Its subcellular location is the chloroplast. The chain is Small ribosomal subunit protein bS18c from Vitis vinifera (Grape).